Here is a 105-residue protein sequence, read N- to C-terminus: Fungal protease inhibitor-1 (105 aa).

An N-terminal signal peptide occupies residues 1 to 19; that stretch reads MKAVITLLFLACILVVTYG. 6 cysteine pairs are disulfide-bonded: Cys-23-Cys-56, Cys-28-Cys-58, Cys-33-Cys-59, Cys-42-Cys-62, Cys-72-Cys-93, and Cys-87-Cys-98.

Functionally, inhibits proteases from the fungi A.oryzae and R.oryzae, trypsin and chymotrypsin. Does not inhibit protease from the bacterium B.licheniformis or papain. In Antheraea mylitta (Tasar silkworm), this protein is Fungal protease inhibitor-1.